Consider the following 201-residue polypeptide: Fimbrial protein FimX (201 aa).

The N-terminal stretch at 1 to 21 (MQAKTFLLGAALAGVALAAHA) is a signal peptide. Cys37 and Cys79 are oxidised to a cystine.

This sequence belongs to the fimbrial protein family.

It localises to the fimbrium. Functionally, bordetella pertussis is the causative agent of whooping cough. An essential step in the disease process is the attachment of the bacteria to the ciliated epithelium of the respiratory tract, enabling the organism to resist normal host-clearance mechanisms. It is unclear which bacterial cell surface component are responsible for adherence but the fimbriae of B.pertussis are prime candidates for being involved in this process. In Bordetella pertussis (strain Tohama I / ATCC BAA-589 / NCTC 13251), this protein is Fimbrial protein FimX (fimX).